The following is a 311-amino-acid chain: Olfactory receptor 2Y1 (311 aa).

Topologically, residues 1 to 25 (MGSFNTSFEDGFILVGFSDWPQLEP) are extracellular. N5 carries N-linked (GlcNAc...) asparagine glycosylation. The helical transmembrane segment at 26-49 (ILFVFIFIFYSLTLFGNTIIIALS) threads the bilayer. Residues 50 to 57 (WLDLRLHT) lie on the Cytoplasmic side of the membrane. The chain crosses the membrane as a helical span at residues 58-79 (PMYFFLSHLSLLDLCFTTSTVP). Topologically, residues 80–100 (QLLINLCGVDRTITRGGCVAQ) are extracellular. C97 and C188 are oxidised to a cystine. The helical transmembrane segment at 101 to 120 (LFIYLALGSTECVLLVVMAF) threads the bilayer. The Cytoplasmic portion of the chain corresponds to 121–139 (DRYAAVCRPLHYMAIMHPH). The chain crosses the membrane as a helical span at residues 140 to 158 (LCQTLAIASWGAGFVNSLI). Topologically, residues 159-194 (QTGLAMAMPLCGHRLNHFFCEMPVFLKLACADTEGT) are extracellular. A helical membrane pass occupies residues 195 to 218 (EAKMFVARVIVVAVPAALILGSYV). Over 219–235 (HIAHAVLRVKSTAGRRK) the chain is Cytoplasmic. Residues 236–258 (AFGTCGSHLLVVFLFYGSAIYTY) form a helical membrane-spanning segment. Topologically, residues 259-271 (LQSIHNYSEREGK) are extracellular. N264 carries an N-linked (GlcNAc...) asparagine glycan. A helical membrane pass occupies residues 272 to 291 (FVALFYTIITPILNPLIYTL). Residues 292-311 (RNKDVKGALWKVLWRGRDSG) lie on the Cytoplasmic side of the membrane.

It belongs to the G-protein coupled receptor 1 family.

The protein resides in the cell membrane. Its function is as follows. Odorant receptor. The chain is Olfactory receptor 2Y1 (OR2Y1) from Homo sapiens (Human).